The sequence spans 310 residues: Glutaminase (310 aa).

Positions 67, 118, 161, 168, 192, 244, and 262 each coordinate substrate.

Belongs to the glutaminase family. Homotetramer.

The catalysed reaction is L-glutamine + H2O = L-glutamate + NH4(+). The sequence is that of Glutaminase from Legionella pneumophila (strain Lens).